A 401-amino-acid polypeptide reads, in one-letter code: MSKKTIANLTSADLSGKRVLVRADFNVPLDGDGKITDDTRIRAALPTIQDLTSKGAKVILASHFGRPKGQVNESMRLTPVAARLSELLGQAVTKCDDCIGDEVAAKVGALQNGQVALLENVRFHSGEEANDPEFARQLASVADLYVNDAFGTAHRAHASTEGVTHHLSPSVAGYLIEKELKYLQAAIEGPQRPLAAIVGGSKVSSKIGVIETLLDKVDKLLIGGGMIFTFYKARGLAVGKSLVEEDKLDLARTLEAKAKEKGVALLLPSDVVVADNFAADANAQTVSINNIPDGWMGLDIGPNSVKEFQAALSDCKTVIWNGPMGVFEFDKFAAGTDAVAHSLAAITETGADTIIGGGDSVAAVEKVGVAEKMSHISTGGGASLELLEGKVLPGIAALDEA.

Substrate contacts are provided by residues 24–26, R40, 63–66, R122, and R155; these read DFN and HFGR. ATP-binding positions include K206, G297, E328, and 357 to 360; that span reads GGDS.

The protein belongs to the phosphoglycerate kinase family. As to quaternary structure, monomer.

The protein localises to the cytoplasm. The catalysed reaction is (2R)-3-phosphoglycerate + ATP = (2R)-3-phospho-glyceroyl phosphate + ADP. Its pathway is carbohydrate degradation; glycolysis; pyruvate from D-glyceraldehyde 3-phosphate: step 2/5. This Acaryochloris marina (strain MBIC 11017) protein is Phosphoglycerate kinase.